Consider the following 142-residue polypeptide: Cytochrome c-type biogenesis protein CcmE (142 aa).

The Cytoplasmic portion of the chain corresponds to 1–2 (MK). Residues 3–23 (GKYLLGILVILGALGYMVFGG) traverse the membrane as a helical; Signal-anchor for type II membrane protein segment. Residues 24 to 142 (LGRNLVYFLT…EVRKLIEEAQ (119 aa)) are Periplasmic-facing. Residues H118 and Y122 each coordinate heme.

This sequence belongs to the CcmE/CycJ family.

The protein localises to the cell inner membrane. Functionally, heme chaperone required for the biogenesis of c-type cytochromes. Transiently binds heme delivered by CcmC and transfers the heme to apo-cytochromes in a process facilitated by CcmF and CcmH. The polypeptide is Cytochrome c-type biogenesis protein CcmE (Thermus thermophilus (strain ATCC 27634 / DSM 579 / HB8)).